A 523-amino-acid chain; its full sequence is GMP synthase [glutamine-hydrolyzing] (523 aa).

The Glutamine amidotransferase type-1 domain maps to 8-205 (KILILDFGSQ…VVGICGCECK (198 aa)). The active-site Nucleophile is the Cys-85. Residues His-179 and Glu-181 contribute to the active site. The GMPS ATP-PPase domain maps to 206-398 (WTAENIIERR…LGLPAEMLNR (193 aa)). An ATP-binding site is contributed by 233–239 (SGGVDSS).

Homodimer.

It carries out the reaction XMP + L-glutamine + ATP + H2O = GMP + L-glutamate + AMP + diphosphate + 2 H(+). It participates in purine metabolism; GMP biosynthesis; GMP from XMP (L-Gln route): step 1/1. Catalyzes the synthesis of GMP from XMP. The sequence is that of GMP synthase [glutamine-hydrolyzing] from Actinobacillus pleuropneumoniae serotype 5b (strain L20).